The sequence spans 89 residues: Small ribosomal subunit protein uS15 (89 aa).

The protein belongs to the universal ribosomal protein uS15 family. Part of the 30S ribosomal subunit. Forms a bridge to the 50S subunit in the 70S ribosome, contacting the 23S rRNA.

Functionally, one of the primary rRNA binding proteins, it binds directly to 16S rRNA where it helps nucleate assembly of the platform of the 30S subunit by binding and bridging several RNA helices of the 16S rRNA. Forms an intersubunit bridge (bridge B4) with the 23S rRNA of the 50S subunit in the ribosome. The polypeptide is Small ribosomal subunit protein uS15 (Prochlorococcus marinus subsp. pastoris (strain CCMP1986 / NIES-2087 / MED4)).